A 471-amino-acid polypeptide reads, in one-letter code: Pancreatic lipase-related protein 2 (471 aa).

Residues 1–17 (MLPSWTIGLLLLATVRG) form the signal peptide. An intrachain disulfide couples C21 to C27. The N-linked (GlcNAc...) asparagine glycan is linked to N71. Positions 93–105 (IHGFIDKGEDSWP) are required for galactolipase activity. C109 and C120 form a disulfide bridge. S171 acts as the Nucleophile in catalysis. D195 serves as the catalytic Charge relay system. Residues E206, R209, D211, and D214 each coordinate Ca(2+). C256 and C280 are oxidised to a cystine. The interval 257–279 (QKNTLSTIVDVDGIWEGIEDFAA) is required for galactolipase activity. H282 (charge relay system) is an active-site residue. 2 disulfide bridges follow: C304–C317 and C320–C325. N-linked (GlcNAc...) asparagine glycosylation is present at N355. A PLAT domain is found at 359–471 (WRYRVSVTLA…ENILQTLNPC (113 aa)). Cysteines 455 and 471 form a disulfide.

This sequence belongs to the AB hydrolase superfamily. Lipase family.

It localises to the secreted. Its subcellular location is the zymogen granule membrane. The protein resides in the cell projection. The protein localises to the neuron projection. It catalyses the reaction a triacylglycerol + H2O = a diacylglycerol + a fatty acid + H(+). The enzyme catalyses a 1,2-diacyl-3-O-(beta-D-galactosyl)-sn-glycerol + 2 H2O = 3-beta-D-galactosyl-sn-glycerol + 2 a fatty acid + 2 H(+). It carries out the reaction 1,2,3-tri-(9Z-octadecenoyl)-glycerol + H2O = di-(9Z)-octadecenoylglycerol + (9Z)-octadecenoate + H(+). The catalysed reaction is di-(9Z)-octadecenoylglycerol + H2O = (9Z-octadecenoyl)-glycerol + (9Z)-octadecenoate + H(+). It catalyses the reaction (9Z-octadecenoyl)-glycerol + H2O = glycerol + (9Z)-octadecenoate + H(+). The enzyme catalyses 1-(9Z-octadecenoyl)-glycerol + H2O = glycerol + (9Z)-octadecenoate + H(+). It carries out the reaction 1,2,3-tripropanoylglycerol + H2O = dipropanoylglycerol + propanoate + H(+). The catalysed reaction is 1,2,3-tributanoylglycerol + H2O = dibutanoylglycerol + butanoate + H(+). It catalyses the reaction 1,2,3-trioctanoylglycerol + H2O = dioctanoylglycerol + octanoate + H(+). The enzyme catalyses 1,2-didecanoylglycerol + H2O = decanoylglycerol + decanoate + H(+). It carries out the reaction long chain 1,2-diacyl-3-O-beta-D-galactosyl-sn-glycerol + H2O = long chain acyl-3-O-beta-D-galactosyl-sn-glycerol + a fatty acid + H(+). The catalysed reaction is 1,2-dioctanoyl-3-O-beta-D-galactosyl-sn-glycerol + H2O = octanoyl-3-(beta-D-galactosyl)-sn-glycerol + octanoate + H(+). It catalyses the reaction 1,2-didodecanoyl-3-beta-D-galactosyl-sn-glycerol + H2O = dodecanoyl-3-beta-D-galactosyl-sn-glycerol + dodecanoate + H(+). The enzyme catalyses 1-beta-D-galactosyl-2,3-didodecanoyl-sn-glycerol + H2O = 1-beta-D-galactosyl-dodecanoyl-sn-glycerol + dodecanoate + H(+). It carries out the reaction a 1,2-diacyl-3-O-[alpha-D-galactosyl-(1-&gt;6)-beta-D-galactosyl]-sn-glycerol + H2O = acyl-3-O-[alpha-D-galactosyl-(1-&gt;6)-beta-D-galactosyl]-sn-glycerol + a fatty acid + H(+). The catalysed reaction is long chain 1,2-diacyl-3-O-[alpha-D-galactosyl-(1-&gt;6)-beta-D-galactosyl]-sn-glycerol + H2O = long chain acyl-3-O-[alpha-D-galactosyl-(1-&gt;6)-beta-D-galactosyl]-sn-glycerol + a fatty acid + H(+). It catalyses the reaction 1,2-dioctanoyl-3-O-[alpha-D-galactosyl-(1-&gt;6)-beta-D-galactosyl]-sn-glycerol + H2O = octanoyl-3-O-[alpha-D-galactosyl-(1-&gt;6)-beta-D-galactosyl]-sn-glycerol + octanoate + H(+). The enzyme catalyses 1,2-didodecanoyl-3-O-[alpha-D-galactosyl-(1-&gt;6)-beta-D-galactosyl]-sn-glycerol + H2O = dodecanoyl-3-O-[alpha-D-galactosyl-(1-&gt;6)-beta-D-galactosyl]-sn-glycerol + dodecanoate + H(+). It carries out the reaction a 1,2-diacyl-sn-glycero-3-phosphocholine + H2O = a monoacyl-sn-glycero-3-phosphocholine + a fatty acid + H(+). Its pathway is glycerolipid metabolism; triacylglycerol degradation. It participates in glycolipid metabolism. With respect to regulation, up-regulated by CLPS in the presence of increasing concentrations of bile salts. Lipase that primarily hydrolyzes triglycerides and galactosylglycerides. In neonates, may play a major role in pancreatic digestion of dietary fats such as milk fat globules enriched in long-chain triglycerides. Hydrolyzes short-, medium- and long-chain fatty acyls in triglycerides without apparent positional specificity. Can completely deacylate triacylglycerols. When the liver matures and bile salt synthesis increases, likely functions mainly as a galactolipase and monoacylglycerol lipase. Hydrolyzes monogalactosyldiglycerols (MGDG) and digalactosyldiacylglycerols (DGDG) present in a plant-based diet, releasing long-chain polyunsaturated fatty acids. Hydrolyzes medium- and long-chain fatty acyls in galactolipids. May act together with LIPF to hydrolyze partially digested triglycerides. Hydrolyzes long-chain monoglycerides with high efficiency. In cytotoxic T cells, contributes to perforin-dependent cell lysis, but is unlikely to mediate direct cytotoxicity. Also has low phospholipase activity. In neurons, required for the localization of the phospholipid 1-oleoyl-2-palmitoyl-PC (OPPC) to neurite tips through acyl chain remodeling of membrane phospholipids. The resulting OPPC-rich lipid membrane domain recruits the t-SNARE protein STX4 by selectively interacting with the STX4 transmembrane domain and this promotes surface expression of the dopamine transporter SLC6A3/DAT at neurite tips by facilitating fusion of SLC6A3-containing transport vesicles with the plasma membrane. This chain is Pancreatic lipase-related protein 2 (PNLIPRP2), found in Sus scrofa (Pig).